A 5101-amino-acid polypeptide reads, in one-letter code: Malformin synthetase mlfA (5101 aa).

The interval 225–616 is adenylation 1; the sequence is ERHAANRPHS…CGRADTQVKL (392 aa). The Carrier 1 domain occupies 757–830; sequence SRLEQKIQLA…EAASLAEVQE (74 aa). Residue Ser-791 is modified to O-(pantetheine 4'-phosphoryl)serine. The condensation 1 stretch occupies residues 868-1299; sequence EDVFPCTTMQ…ALNTLSLLQA (432 aa). The adenylation 2 stretch occupies residues 1327–1716; the sequence is DRWVTRQPEG…GRKDTQVKLR (390 aa). A Carrier 2 domain is found at 1854-1931; it reads TPTLELERTL…QLAAEVGEPA (78 aa). O-(pantetheine 4'-phosphoryl)serine is present on Ser-1891. 2 disordered regions span residues 1932–1961 and 1994–2020; these read GQSASSASSTTEEGFTFSTPDDSSTNDGVD and GGSSSNKTPSVSSSSSSSSSSKRKKNA. Composition is skewed to low complexity over residues 1934–1958 and 1996–2013; these read SASSASSTTEEGFTFSTPDDSSTND and SSSNKTPSVSSSSSSSSS. The tract at residues 2066-2481 is condensation 2; sequence EDIYPATALQ…AVSCSDKETL (416 aa). The interval 2504–2896 is adenylation 3; sequence RRTPHAPAVC…IGRRDGQLKL (393 aa). The region spanning 3032-3108 is the Carrier 3 domain; it reads RPVTSQEHEM…QLICHLNTIR (77 aa). Ser-3069 is subject to O-(pantetheine 4'-phosphoryl)serine. 2 condensation regions span residues 3125-3590 and 3611-4030; these read WVAL…TYDQ and NIYP…EHLV. The adenylation 4 stretch occupies residues 4055–4445; that stretch reads HNSRQAVCAW…VGRKDNQIKF (391 aa). The Carrier 4 domain maps to 4579 to 4655; it reads MPSTAAERKM…DLSDQAKSLI (77 aa). An O-(pantetheine 4'-phosphoryl)serine modification is found at Ser-4616. The condensation 5 stretch occupies residues 4712-5097; sequence IVVDIPGPID…KIVGLLRHPE (386 aa).

Belongs to the NRP synthetase family.

Its pathway is secondary metabolite biosynthesis. Nonribosomal peptide synthetase; part of the gene cluster that mediates the biosynthesis of malformins, cyclic pentapeptides with a disulfide bond between 2 consecutive cysteins, that show potential anti-tumor as well as antimalarial and antitrypanosomal properties. The nonribosomal peptide synthetase mlfA is responsible of the formation of the cyclic pentapeptide. The malformin biosynthesis clusters in malformin-producing fungi also contain enzymes involved in the formation of the disulfide bond between the two consecutive cysteins within malformins, in addition to additional tailoring enzymes such as methyltransferases or oxidoreductases. They are also composed of up to 4 major facilitator superfamily transporters, and transcription factors probably involved in the regulation of the expression of those clusters. The sequence is that of Malformin synthetase mlfA from Aspergillus kawachii (strain NBRC 4308) (White koji mold).